Here is a 496-residue protein sequence, read N- to C-terminus: Angiopoietin-2 (496 aa).

The first 18 residues, 1 to 18, serve as a signal peptide directing secretion; that stretch reads MWQLVFLTLSCDLAVATA. Residues Asn90, Asn120, Asn134, Asn152, Asn241, and Asn304 are each glycosylated (N-linked (GlcNAc...) asparagine). Positions 167-249 form a coiled coil; it reads STNKLEKQIL…VNNSVLQKQQ (83 aa). The Fibrinogen C-terminal domain occupies 275–495; that stretch reads KDEQIIFRDC…ATTMMIRPAD (221 aa). A disulfide bond links Cys284 and Cys313. The Ca(2+) site is built by Asp429, Asp431, Cys433, and Cys435. Intrachain disulfides connect Cys433–Cys435 and Cys437–Cys450.

In terms of assembly, interacts with TEK/TIE2, competing for the same binding site as ANGPT1. Interacts with ITGA5. Interacts with SVEP1/polydom. Interacts with THBD; this interaction significantly inhibits the generation of activated PC and TAFIa/CPB2 by the thrombin/thrombomodulin complex.

The protein resides in the secreted. In terms of biological role, binds to TEK/TIE2, competing for the ANGPT1 binding site, and modulating ANGPT1 signaling. Can induce tyrosine phosphorylation of TEK/TIE2 in the absence of ANGPT1. In the absence of angiogenic inducers, such as VEGF, ANGPT2-mediated loosening of cell-matrix contacts may induce endothelial cell apoptosis with consequent vascular regression. In concert with VEGF, it may facilitate endothelial cell migration and proliferation, thus serving as a permissive angiogenic signal. Involved in the regulation of lymphangiogenesis. The protein is Angiopoietin-2 (ANGPT2) of Bos taurus (Bovine).